Consider the following 566-residue polypeptide: Solute carrier family 2, facilitated glucose transporter member 9 (566 aa).

Residues 1–31 are disordered; that stretch reads MARKQNRNSKELGLAPLADDTSHAGPPGPGR. Residues 1 to 51 lie on the Cytoplasmic side of the membrane; sequence MARKQNRNSKELGLAPLADDTSHAGPPGPGRALLECDHLRSGLPDGRRRKD. Serine 9 carries the phosphoserine modification. A helical transmembrane segment spans residues 52-72; that stretch reads WSCSLLVASLAGAFGSSFLYG. Residues 73–107 lie on the Extracellular side of the membrane; sequence YNLSVVNAPTPYIKAFYNESWERRHGRPIDPDTLT. N-linked (GlcNAc...) asparagine glycans are attached at residues asparagine 74 and asparagine 90. A helical transmembrane segment spans residues 108–128; that stretch reads LLWSVTVSIFAIGGLVGTLMV. Topologically, residues 129 to 140 are cytoplasmic; it reads KMIGKVLGRKHT. Residues 141–161 traverse the membrane as a helical segment; that stretch reads LLANNGFAISAALLMACSLQA. The Extracellular segment spans residues 162-171; that stretch reads GAFEMLIVGR. The chain crosses the membrane as a helical span at residues 172 to 192; that stretch reads FIMGIDGGIALSVLPMYLSEI. Topologically, residues 193–200 are cytoplasmic; sequence SPKEIRGS. A helical transmembrane segment spans residues 201-221; the sequence is LGQVTAIFICIGVFTGQLLGL. Residues 222-231 lie on the Extracellular side of the membrane; the sequence is PELLGKESTW. Residues 232 to 252 form a helical membrane-spanning segment; sequence PYLFGVIVVPAVVQLLSLPFL. Residues 253-316 lie on the Cytoplasmic side of the membrane; it reads PDSPRYLLLE…LRAPYVRWQV (64 aa). A helical transmembrane segment spans residues 317 to 337; it reads VTVIVTMACYQLCGLNAIWFY. The Extracellular segment spans residues 338–354; sequence TNSIFGKAGIPPAKIPY. A helical transmembrane segment spans residues 355–375; sequence VTLSTGGIETLAAIFSGLVIE. The Cytoplasmic portion of the chain corresponds to 376 to 381; the sequence is HLGRRP. The chain crosses the membrane as a helical span at residues 382–402; that stretch reads LLIGGFGLMALFFGTLTVTLT. The Extracellular segment spans residues 403–415; it reads LQDRAPWVPYLSI. The chain crosses the membrane as a helical span at residues 416–436; that stretch reads VGILAIIASFCSGPGGIPFIL. Over 437 to 451 the chain is Cytoplasmic; it reads TGEFFQQSQRPAAFI. Residues 452 to 472 traverse the membrane as a helical segment; sequence IAGTVNWLSNFAVGLLFPFIQ. At 473-478 the chain is on the extracellular side; sequence KSLDTY. A helical transmembrane segment spans residues 479 to 499; the sequence is CFLVFATICMTGAIYLYFVLP. At 500-566 the chain is on the cytoplasmic side; the sequence is ETKNRTYAEI…YMDDLTFQET (67 aa). Serine 514 is modified (phosphoserine). Residues 524-539 show a composition bias toward basic and acidic residues; that stretch reads EKIDSAVTDGKTKGRP. Residues 524-543 form a disordered region; the sequence is EKIDSAVTDGKTKGRPEQVS.

It belongs to the major facilitator superfamily. Sugar transporter (TC 2.A.1.1) family.

It is found in the basolateral cell membrane. It localises to the apical cell membrane. The catalysed reaction is urate(out) = urate(in). High-capacity urate transporter, which may play a role in the urate reabsorption by proximal tubules. May have a residual high-affinity, low-capacity glucose and fructose transporter activity. Transports urate at rates 45- to 60-fold faster than glucose. Does not transport galactose. May mediate small uptake of adenine but not of other nucleobases. This Pongo abelii (Sumatran orangutan) protein is Solute carrier family 2, facilitated glucose transporter member 9.